We begin with the raw amino-acid sequence, 61 residues long: Small ribosomal subunit protein uS14 (61 aa).

Residues cysteine 24, cysteine 27, cysteine 40, and cysteine 43 each contribute to the Zn(2+) site.

This sequence belongs to the universal ribosomal protein uS14 family. Zinc-binding uS14 subfamily. In terms of assembly, part of the 30S ribosomal subunit. Contacts proteins S3 and S10. Zn(2+) serves as cofactor.

Its function is as follows. Binds 16S rRNA, required for the assembly of 30S particles and may also be responsible for determining the conformation of the 16S rRNA at the A site. This is Small ribosomal subunit protein uS14 from Sulfurovum sp. (strain NBC37-1).